A 327-amino-acid chain; its full sequence is Gibberellin 2-beta-dioxygenase 1 (327 aa).

Residues 171-276 (QSDCLFRVNH…RLSMIYFCGP (106 aa)) form the Fe2OG dioxygenase domain. Fe cation-binding residues include His200, Asp202, and His257. Arg267 is a catalytic residue.

The protein belongs to the iron/ascorbate-dependent oxidoreductase family. GA2OX subfamily. Requires Fe cation as cofactor. Predominantly expressed in roots, flowers, young fruits and seeds.

The enzyme catalyses gibberellin A1 + 2-oxoglutarate + O2 = gibberellin A8 + succinate + CO2. It functions in the pathway plant hormone biosynthesis; gibberellin biosynthesis. Functionally, catalyzes the 2-beta-hydroxylation of several biologically active gibberellins, leading to the homeostatic regulation of their endogenous level. Catabolism of gibberellins (GAs) plays a central role in plant development. Converts GA9/GA20 to GA51/GA29 and GA4/GA1 to GA34/GA8. This chain is Gibberellin 2-beta-dioxygenase 1 (GA2OX1), found in Pisum sativum (Garden pea).